The primary structure comprises 122 residues: Secreted RxLR effector protein RXLR-C251 (122 aa).

Positions 1–24 (MRFFYKLALMTTVASLACSDTALA) are cleaved as a signal peptide. Positions 48–51 (RSLR) match the RxLR motif.

It belongs to the RxLR effector family.

It localises to the secreted. It is found in the host cytoplasm. Its subcellular location is the host nucleus. Secreted effector that does not suppress pattern-triggered immunity (PTI) in plant host. The sequence is that of Secreted RxLR effector protein RXLR-C251 from Plasmopara halstedii (Downy mildew of sunflower).